Reading from the N-terminus, the 383-residue chain is Succinyl-diaminopimelate desuccinylase (383 aa).

His73 serves as a coordination point for Zn(2+). Asp75 is a catalytic residue. Asp107 contacts Zn(2+). Glu141 functions as the Proton acceptor in the catalytic mechanism. Zn(2+) contacts are provided by Glu142, Glu170, and His356.

Belongs to the peptidase M20A family. DapE subfamily. As to quaternary structure, homodimer. Requires Zn(2+) as cofactor. It depends on Co(2+) as a cofactor.

The enzyme catalyses N-succinyl-(2S,6S)-2,6-diaminopimelate + H2O = (2S,6S)-2,6-diaminopimelate + succinate. It functions in the pathway amino-acid biosynthesis; L-lysine biosynthesis via DAP pathway; LL-2,6-diaminopimelate from (S)-tetrahydrodipicolinate (succinylase route): step 3/3. In terms of biological role, catalyzes the hydrolysis of N-succinyl-L,L-diaminopimelic acid (SDAP), forming succinate and LL-2,6-diaminopimelate (DAP), an intermediate involved in the bacterial biosynthesis of lysine and meso-diaminopimelic acid, an essential component of bacterial cell walls. The chain is Succinyl-diaminopimelate desuccinylase from Pseudomonas putida (strain GB-1).